Reading from the N-terminus, the 306-residue chain is Aspartate carbamoyltransferase catalytic subunit (306 aa).

Residues Arg-55 and Thr-56 each contribute to the carbamoyl phosphate site. Lys-84 serves as a coordination point for L-aspartate. Carbamoyl phosphate-binding residues include Arg-105, His-133, and Gln-136. L-aspartate is bound by residues Arg-166 and Arg-227. Residues Leu-265 and Pro-266 each contribute to the carbamoyl phosphate site.

This sequence belongs to the aspartate/ornithine carbamoyltransferase superfamily. ATCase family. In terms of assembly, heterododecamer (2C3:3R2) of six catalytic PyrB chains organized as two trimers (C3), and six regulatory PyrI chains organized as three dimers (R2).

It catalyses the reaction carbamoyl phosphate + L-aspartate = N-carbamoyl-L-aspartate + phosphate + H(+). The protein operates within pyrimidine metabolism; UMP biosynthesis via de novo pathway; (S)-dihydroorotate from bicarbonate: step 2/3. Its function is as follows. Catalyzes the condensation of carbamoyl phosphate and aspartate to form carbamoyl aspartate and inorganic phosphate, the committed step in the de novo pyrimidine nucleotide biosynthesis pathway. The chain is Aspartate carbamoyltransferase catalytic subunit from Neisseria gonorrhoeae (strain ATCC 700825 / FA 1090).